Reading from the N-terminus, the 200-residue chain is Inner membrane protein E199L (200 aa).

Asparagine 131 is a glycosylation site (N-linked (GlcNAc...) asparagine; by host). Residues 150 to 170 (INVMNHPFLTLILIILILIII) traverse the membrane as a helical segment.

Belongs to the asfivirus E199L family. Interacts with host PYCR2; this interaction results in autophagy activation. In terms of processing, contains intramolecular disulfide bonds.

It is found in the virion membrane. The protein localises to the host membrane. Essential for viral fusion with host endosomal membrane and core release. Not required for virus morphogenesis and egress. Induces complete autophagy through the interaction with and down-regulation of host PYCR2. This is Inner membrane protein E199L from Ornithodoros (relapsing fever ticks).